Here is a 145-residue protein sequence, read N- to C-terminus: MTQTIFVLNGPNLNMLGKREPGIYGGKTLKDIEADCKAAGRELGLDIDFRQSNHEGTLVDWFHEADEKAVGVAINAGAYTHTSVALHDAIRAISIPVVELHISNVHAREEFRHKSMIAPACKGVICGFGPHSYILALHALKNITA.

The active-site Proton acceptor is Y24. Substrate-binding residues include N75, H81, and D88. Catalysis depends on H101, which acts as the Proton donor. Substrate is bound by residues 102 to 103 and R112; that span reads IS.

It belongs to the type-II 3-dehydroquinase family. In terms of assembly, homododecamer.

It carries out the reaction 3-dehydroquinate = 3-dehydroshikimate + H2O. Its pathway is metabolic intermediate biosynthesis; chorismate biosynthesis; chorismate from D-erythrose 4-phosphate and phosphoenolpyruvate: step 3/7. Catalyzes a trans-dehydration via an enolate intermediate. The chain is 3-dehydroquinate dehydratase from Rhizobium johnstonii (strain DSM 114642 / LMG 32736 / 3841) (Rhizobium leguminosarum bv. viciae).